A 162-amino-acid chain; its full sequence is Ribosome maturation factor RimP (162 aa).

The protein belongs to the RimP family.

The protein localises to the cytoplasm. Functionally, required for maturation of 30S ribosomal subunits. The sequence is that of Ribosome maturation factor RimP from Leptospira interrogans serogroup Icterohaemorrhagiae serovar copenhageni (strain Fiocruz L1-130).